Here is a 430-residue protein sequence, read N- to C-terminus: Adenylosuccinate synthetase (430 aa).

GTP-binding positions include 12–18 (GDEGKGK) and 40–42 (GHT). Catalysis depends on D13, which acts as the Proton acceptor. Mg(2+) contacts are provided by D13 and G40. Residues 13 to 16 (DEGK), 38 to 41 (NAGH), T128, R142, Q223, T238, and R302 contribute to the IMP site. H41 functions as the Proton donor in the catalytic mechanism. 298 to 304 (TTTGRPR) provides a ligand contact to substrate. GTP-binding positions include R304, 330–332 (SID), and 413–415 (SVG).

Belongs to the adenylosuccinate synthetase family. Homodimer. It depends on Mg(2+) as a cofactor.

The protein localises to the cytoplasm. The enzyme catalyses IMP + L-aspartate + GTP = N(6)-(1,2-dicarboxyethyl)-AMP + GDP + phosphate + 2 H(+). It participates in purine metabolism; AMP biosynthesis via de novo pathway; AMP from IMP: step 1/2. Functionally, plays an important role in the de novo pathway of purine nucleotide biosynthesis. Catalyzes the first committed step in the biosynthesis of AMP from IMP. This is Adenylosuccinate synthetase from Lactococcus lactis subsp. lactis (strain IL1403) (Streptococcus lactis).